A 150-amino-acid chain; its full sequence is Protein E6 (150 aa).

Zinc fingers lie at residues 31–67 (CVFC…CACC) and 104–140 (CYLC…CFHC).

The protein belongs to the papillomaviridae E6 protein family. In terms of assembly, forms homodimers. Interacts with ubiquitin-protein ligase UBE3A/E6-AP; this interaction stimulates UBE3A ubiquitin activity. Interacts with host TP53 and EP300; this interaction inhibits TP53 activity.

Its subcellular location is the host cytoplasm. The protein localises to the host nucleus. Plays a major role in the induction and maintenance of cellular transformation. E6 associates with host UBE3A/E6-AP ubiquitin-protein ligase and modulates its activity. Sequesters tumor suppressor TP53 in the host cytoplasm and modulates its activity by interacting with host EP300 that results in the reduction of TP53 acetylation and activation. In turn, apoptosis induced by DNA damage is inhibited. E6 also protects host keratinocytes from apoptosis by mediating the degradation of host BAK1. May also inhibit host immune response. This is Protein E6 from Pygmy chimpanzee papillomavirus type 1 (PCPV-1).